The following is a 623-amino-acid chain: Kelch repeat and BTB domain-containing protein 2 (623 aa).

Positions 31-98 (TDIVLIVEGT…AYTGNLAMND (68 aa)) constitute a BTB domain. The 97-residue stretch at 133–229 (CVRLLSFADL…IRIDALSEVT (97 aa)) folds into the BACK domain. Position 300 is a phosphoserine (S300). Kelch repeat units lie at residues 317 to 380 (DIYI…CCEG), 381 to 429 (YIYA…VVHD), 431 to 469 (IYVM…AFGD), 470 to 529 (KIFY…RAVV), and 535 to 581 (CVFM…DFRC).

As to quaternary structure, component of the BCR(KBTBD2) E3 ubiquitin ligase complex, at least composed of CUL3, KBTBD2 and RBX1. Interacts (via the BTB domain) with CUL3.

The protein operates within protein modification; protein ubiquitination. Functionally, substrate-specific adapter of a BCR (BTB-CUL3-RBX1) E3 ubiquitin ligase complex that acts as a regulator of the insulin signaling pathway, modulating insulin sensitivity by limiting PIK3R1/p85alpha abundance in adipocytes. Targets PIK3R1, the regulatory subunit of phosphatidylinositol 3-kinase (PI3K), for 'Lys-48'-linked polyubiquitination and proteasome-mediated degradation. The polypeptide is Kelch repeat and BTB domain-containing protein 2 (Homo sapiens (Human)).